A 402-amino-acid polypeptide reads, in one-letter code: Putative RNA-guided DNA endonuclease InsQ (402 aa).

Residues Asp-183 and Glu-267 contribute to the active site. Zn(2+) contacts are provided by Cys-334, Cys-337, Cys-353, and Cys-356. The active site involves Asp-363.

In the N-terminal section; belongs to the transposase 2 family. This sequence in the C-terminal section; belongs to the transposase 35 family.

An RNA-guided dsDNA endonuclease. When guided by an RNA derived from the right-end element of its insertion sequence element (IS), cleaves DNA downstream of the transposon-associated motif (TAM). Cleaves supercoiled and linear DNA in a staggered manner 15-21 bases from the TAM yielding 5'-overhangs. Binds reRNA, an approximately 150 nucleotide base sRNA derived from the 3' end of its own gene, the right end (RE) of the insertion sequence (IS) plus sequence downstream of the IS. In terms of biological role, not required for transposition of the insertion element. The corresponding transposase in strains MG1655 and W3110 is a truncated pseudogene (yncK). In Escherichia coli (strain K12), this protein is Putative RNA-guided DNA endonuclease InsQ (insQ).